The chain runs to 813 residues: Homeobox-leucine zipper protein ROC4 (813 aa).

The interval 62-112 is disordered; the sequence is EVENEMSRSGSDHLDVVSCGDAGGGGGDDDDDEDAEHGNPPKRKKRYHRHT. The segment covering 101-112 has biased composition (basic residues); that stretch reads PPKRKKRYHRHT. The segment at residues 104 to 163 is a DNA-binding region (homeobox); that stretch reads RKKRYHRHTPQQIQELEAMFKECPHPDEKQRAELSKRLGLEPRQVKFWFQNRRTQMKMQL. Positions 152 to 191 form a coiled coil; sequence FQNRRTQMKMQLERHENSLLKQENDKLRSENLSIREATSN. In terms of domain architecture, START spans 306 to 559; sequence AGIDKSLFLE…LQRQCECLAL (254 aa).

It belongs to the HD-ZIP homeobox family. Class IV subfamily.

It is found in the nucleus. Probable transcription factor. The polypeptide is Homeobox-leucine zipper protein ROC4 (ROC4) (Oryza sativa subsp. japonica (Rice)).